The sequence spans 274 residues: MPELPEVETCLRGIEPYLAGQTIQQIVIRTPKLRWPISAELCAMSGAKILALSRRAKYLIIHTERGDILVHLGMSGSLTLLNSSQPTKASKHDHVDLITEAGIILRYNDPRKFGAWLWAKQAENYPLITKLGPEPLSDTFTSDYLFKKSRNKTVAVKNFIMNNDIVVGVGNIYASESLFMAGVHPELAAQNLTEKQCVQLRNVIQAVLTKAIIQGGTTLKDFTQPDGKPGYFAQVLQVYGRKGEECRECGTLIQAKVIGQRNSYFCPDCQPLPK.

Pro2 (schiff-base intermediate with DNA) is an active-site residue. Glu3 acts as the Proton donor in catalysis. Residue Lys57 is the Proton donor; for beta-elimination activity of the active site. Positions 92, 111, and 152 each coordinate DNA. The FPG-type zinc-finger motif lies at 237–271 (QVYGRKGEECRECGTLIQAKVIGQRNSYFCPDCQP). Catalysis depends on Arg261, which acts as the Proton donor; for delta-elimination activity.

It belongs to the FPG family. In terms of assembly, monomer. Requires Zn(2+) as cofactor.

The enzyme catalyses Hydrolysis of DNA containing ring-opened 7-methylguanine residues, releasing 2,6-diamino-4-hydroxy-5-(N-methyl)formamidopyrimidine.. The catalysed reaction is 2'-deoxyribonucleotide-(2'-deoxyribose 5'-phosphate)-2'-deoxyribonucleotide-DNA = a 3'-end 2'-deoxyribonucleotide-(2,3-dehydro-2,3-deoxyribose 5'-phosphate)-DNA + a 5'-end 5'-phospho-2'-deoxyribonucleoside-DNA + H(+). Involved in base excision repair of DNA damaged by oxidation or by mutagenic agents. Acts as a DNA glycosylase that recognizes and removes damaged bases. Has a preference for oxidized purines, such as 7,8-dihydro-8-oxoguanine (8-oxoG). Has AP (apurinic/apyrimidinic) lyase activity and introduces nicks in the DNA strand. Cleaves the DNA backbone by beta-delta elimination to generate a single-strand break at the site of the removed base with both 3'- and 5'-phosphates. This is Formamidopyrimidine-DNA glycosylase from Haemophilus ducreyi (strain 35000HP / ATCC 700724).